A 227-amino-acid polypeptide reads, in one-letter code: Cytochrome c oxidase subunit 2 (227 aa).

The Mitochondrial intermembrane segment spans residues 1-14 (MAYPLQLGLQDASS). Residues 15–45 (PIMEELMNFHDHTLMIVFLISSLVLYLISLM) form a helical membrane-spanning segment. Topologically, residues 46-59 (LTTKLIHTSTMDAQ) are mitochondrial matrix. Residues 60 to 87 (EVETVWTILPAIILILIALPSLRILYMM) form a helical membrane-spanning segment. The Mitochondrial intermembrane portion of the chain corresponds to 88–227 (DEINNPVLTV…LFENWSLSLT (140 aa)). Cu cation contacts are provided by H161, C196, E198, C200, H204, and M207. Mg(2+) is bound at residue E198.

This sequence belongs to the cytochrome c oxidase subunit 2 family. Component of the cytochrome c oxidase (complex IV, CIV), a multisubunit enzyme composed of 14 subunits. The complex is composed of a catalytic core of 3 subunits MT-CO1, MT-CO2 and MT-CO3, encoded in the mitochondrial DNA, and 11 supernumerary subunits COX4I, COX5A, COX5B, COX6A, COX6B, COX6C, COX7A, COX7B, COX7C, COX8 and NDUFA4, which are encoded in the nuclear genome. The complex exists as a monomer or a dimer and forms supercomplexes (SCs) in the inner mitochondrial membrane with NADH-ubiquinone oxidoreductase (complex I, CI) and ubiquinol-cytochrome c oxidoreductase (cytochrome b-c1 complex, complex III, CIII), resulting in different assemblies (supercomplex SCI(1)III(2)IV(1) and megacomplex MCI(2)III(2)IV(2)). Found in a complex with TMEM177, COA6, COX18, COX20, SCO1 and SCO2. Interacts with TMEM177 in a COX20-dependent manner. Interacts with COX20. Interacts with COX16. Cu cation is required as a cofactor.

It localises to the mitochondrion inner membrane. It catalyses the reaction 4 Fe(II)-[cytochrome c] + O2 + 8 H(+)(in) = 4 Fe(III)-[cytochrome c] + 2 H2O + 4 H(+)(out). In terms of biological role, component of the cytochrome c oxidase, the last enzyme in the mitochondrial electron transport chain which drives oxidative phosphorylation. The respiratory chain contains 3 multisubunit complexes succinate dehydrogenase (complex II, CII), ubiquinol-cytochrome c oxidoreductase (cytochrome b-c1 complex, complex III, CIII) and cytochrome c oxidase (complex IV, CIV), that cooperate to transfer electrons derived from NADH and succinate to molecular oxygen, creating an electrochemical gradient over the inner membrane that drives transmembrane transport and the ATP synthase. Cytochrome c oxidase is the component of the respiratory chain that catalyzes the reduction of oxygen to water. Electrons originating from reduced cytochrome c in the intermembrane space (IMS) are transferred via the dinuclear copper A center (CU(A)) of subunit 2 and heme A of subunit 1 to the active site in subunit 1, a binuclear center (BNC) formed by heme A3 and copper B (CU(B)). The BNC reduces molecular oxygen to 2 water molecules using 4 electrons from cytochrome c in the IMS and 4 protons from the mitochondrial matrix. In Taterillus emini (Emin's gerbil), this protein is Cytochrome c oxidase subunit 2 (MT-CO2).